The sequence spans 368 residues: Aminomethyltransferase (368 aa).

It belongs to the GcvT family. In terms of assembly, the glycine cleavage system is composed of four proteins: P, T, L and H.

It catalyses the reaction N(6)-[(R)-S(8)-aminomethyldihydrolipoyl]-L-lysyl-[protein] + (6S)-5,6,7,8-tetrahydrofolate = N(6)-[(R)-dihydrolipoyl]-L-lysyl-[protein] + (6R)-5,10-methylene-5,6,7,8-tetrahydrofolate + NH4(+). In terms of biological role, the glycine cleavage system catalyzes the degradation of glycine. The polypeptide is Aminomethyltransferase (Xylella fastidiosa (strain M12)).